The primary structure comprises 513 residues: ATP synthase subunit alpha (513 aa).

169–176 serves as a coordination point for ATP; the sequence is GDRQTGKT.

The protein belongs to the ATPase alpha/beta chains family. In terms of assembly, F-type ATPases have 2 components, CF(1) - the catalytic core - and CF(0) - the membrane proton channel. CF(1) has five subunits: alpha(3), beta(3), gamma(1), delta(1), epsilon(1). CF(0) has three main subunits: a(1), b(2) and c(9-12). The alpha and beta chains form an alternating ring which encloses part of the gamma chain. CF(1) is attached to CF(0) by a central stalk formed by the gamma and epsilon chains, while a peripheral stalk is formed by the delta and b chains.

It is found in the cell inner membrane. It catalyses the reaction ATP + H2O + 4 H(+)(in) = ADP + phosphate + 5 H(+)(out). Its function is as follows. Produces ATP from ADP in the presence of a proton gradient across the membrane. The alpha chain is a regulatory subunit. This Shewanella denitrificans (strain OS217 / ATCC BAA-1090 / DSM 15013) protein is ATP synthase subunit alpha.